The primary structure comprises 295 residues: 4-hydroxy-tetrahydrodipicolinate synthase (295 aa).

Thr47 contacts pyruvate. The Proton donor/acceptor role is filled by Tyr135. Lys163 (schiff-base intermediate with substrate) is an active-site residue. Residue Ile206 coordinates pyruvate.

This sequence belongs to the DapA family. As to quaternary structure, homodimer.

It is found in the cytoplasm. It carries out the reaction L-aspartate 4-semialdehyde + pyruvate = (2S,4S)-4-hydroxy-2,3,4,5-tetrahydrodipicolinate + H2O + H(+). It participates in amino-acid biosynthesis; L-lysine biosynthesis via DAP pathway; (S)-tetrahydrodipicolinate from L-aspartate: step 3/4. Is not feedback inhibited by lysine. In terms of biological role, catalyzes the condensation of (S)-aspartate-beta-semialdehyde [(S)-ASA] and pyruvate to 4-hydroxy-tetrahydrodipicolinate (HTPA). The protein is 4-hydroxy-tetrahydrodipicolinate synthase of Staphylococcus aureus (strain COL).